The chain runs to 906 residues: Cadherin-2 (906 aa).

A signal peptide spans 1–25 (MCRIAGAPRTLLPLLAALLQASVEA). The propeptide occupies 26-159 (SGEIALCKTG…HSGALQRQKR (134 aa)). Cadherin domains lie at 160-267 (DWVI…RPEF), 268-382 (LHQV…PPEF), 383-497 (TAMT…NPYF), 498-603 (APNP…DNAP), and 604-717 (QVLP…RIVG). The Extracellular segment spans residues 160–724 (DWVIPPINLP…IVGAGLGTGA (565 aa)). Residue glutamate 170 participates in Ca(2+) binding. Residue asparagine 190 is glycosylated (N-linked (GlcNAc...) asparagine). 7 residues coordinate Ca(2+): aspartate 226, glutamate 228, aspartate 259, methionine 260, asparagine 261, aspartate 262, and asparagine 263. N-linked (GlcNAc...) asparagine glycosylation is present at asparagine 273. Positions 293, 295, and 301 each coordinate Ca(2+). Asparagine 325 carries N-linked (GlcNAc...) asparagine glycosylation. Residue aspartate 353 participates in Ca(2+) binding. 4 N-linked (GlcNAc...) asparagine glycosylation sites follow: asparagine 402, asparagine 572, asparagine 651, and asparagine 692. Residues 725–745 (IIAILLCIIILLILVLMFVVW) traverse the membrane as a helical segment. Over 746–906 (MKRRDKERQA…LADMYGGGDD (161 aa)) the chain is Cytoplasmic. Over residues 863 to 880 (SGSTAGSLSSLNSSSSGG) the composition is skewed to low complexity. Residues 863–883 (SGSTAGSLSSLNSSSSGGDQD) form a disordered region.

In terms of assembly, homodimer (via extracellular region). Can also form heterodimers with other cadherins (via extracellular region). Dimerization occurs in trans, i.e. with a cadherin chain from another cell. Interacts with CDCP1. Interacts with PCDH8; this complex may also include TAOK2. The interaction with PCDH8 may lead to internalization through TAOK2/p38 MAPK pathway. Identified in a complex containing FGFR4, NCAM1, CDH2, PLCG1, FRS2, SRC, SHC1, GAP43 and CTTN. May interact with OBSCN (via protein kinase domain 2). Interacts with FBXO45. Cleaved by MMP24. Ectodomain cleavage leads to the generation of a soluble 90 kDa N-terminal soluble fragment and a 45 kDa membrane-bound C-terminal fragment 1 (CTF1), which is further cleaved by gamma-secretase into a 35 kDa. Cleavage in neural stem cells by MMP24 affects CDH2-mediated anchorage of neural stem cells to ependymocytes in the adult subependymal zone, leading to modulate neural stem cell quiescence. In terms of processing, may be phosphorylated by OBSCN. Post-translationally, O-glycosylated on Ser and Thr residues. In terms of tissue distribution, expressed in cardiac muscle (at protein level).

It localises to the cell membrane. The protein localises to the sarcolemma. The protein resides in the cell junction. Its subcellular location is the adherens junction. It is found in the desmosome. It localises to the cell surface. Its function is as follows. Calcium-dependent cell adhesion protein; preferentially mediates homotypic cell-cell adhesion by dimerization with a CDH2 chain from another cell. Cadherins may thus contribute to the sorting of heterogeneous cell types. Acts as a regulator of neural stem cells quiescence by mediating anchorage of neural stem cells to ependymocytes in the adult subependymal zone: upon cleavage by MMP24, CDH2-mediated anchorage is affected, leading to modulate neural stem cell quiescence. Plays a role in cell-to-cell junction formation between pancreatic beta cells and neural crest stem (NCS) cells, promoting the formation of processes by NCS cells. Required for proper neurite branching. Required for pre- and postsynaptic organization. CDH2 may be involved in neuronal recognition mechanism. In hippocampal neurons, may regulate dendritic spine density. The chain is Cadherin-2 (Cdh2) from Mus musculus (Mouse).